The chain runs to 519 residues: Cytochrome P450 52E1 (519 aa).

The next 2 helical transmembrane spans lie at 10-30 and 44-64; these read ALGGIALSFLVAYQFIYFYFI and VIVFSFPLGLPALYKFATAML. Residue cysteine 479 coordinates heme.

It belongs to the cytochrome P450 family. Heme serves as cofactor.

The protein resides in the membrane. Functionally, together with an NADPH cytochrome P450 the enzyme system catalyzes the terminal hydroxylation as the first step in the assimilation of alkanes and fatty acids. The sequence is that of Cytochrome P450 52E1 (CYP52E1) from Candida apicola (Yeast).